Reading from the N-terminus, the 236-residue chain is MIEQQQFGQSRICYDSEWVSSPELALFDPQYWQAQNKVVGSATGRGTTWFVQLPKITAALRHYRRGGLFGKLVKDHYWFQSWSATRSFAEFHLLKQLREAGVNVPRPIAAYAMRKGLFYQADLLSERIANAQDLVTILQKHSLSAELYQKIGVEIAKMHRVGVNHTDLNIHNILIDAQETIWIIDFDKCYPQAGDGWKQENLDRLKRSFNKERVKRSIHWHDKDFHALLTGYESQQ.

Residue aspartate 167 is part of the active site.

Belongs to the protein kinase superfamily. KdkA/RfaP family.

The protein resides in the cell inner membrane. The catalysed reaction is an alpha-Kdo-(2-&gt;6)-lipid IVA + ATP = a 4-O-phospho-alpha-Kdo-(2-&gt;6)-lipid IVA + ADP + H(+). The protein operates within bacterial outer membrane biogenesis; LPS core biosynthesis. Catalyzes the ATP-dependent phosphorylation of the 3-deoxy-D-manno-octulosonic acid (Kdo) residue in Kdo-lipid IV(A) at the 4-OH position. This Vibrio vulnificus (strain CMCP6) protein is 3-deoxy-D-manno-octulosonic acid kinase.